The sequence spans 370 residues: Dual-specificity RNA methyltransferase RlmN (370 aa).

Glu93 (proton acceptor) is an active-site residue. Residues 99-337 (EEGRGTLCVS…VTTVRKTRGD (239 aa)) enclose the Radical SAM core domain. An intrachain disulfide couples Cys106 to Cys343. Positions 113, 117, and 120 each coordinate [4Fe-4S] cluster. S-adenosyl-L-methionine-binding positions include 167–168 (GE), Ser199, 221–223 (SLH), and Asn300. The active-site S-methylcysteine intermediate is the Cys343.

The protein belongs to the radical SAM superfamily. RlmN family. Requires [4Fe-4S] cluster as cofactor.

It is found in the cytoplasm. The enzyme catalyses adenosine(2503) in 23S rRNA + 2 reduced [2Fe-2S]-[ferredoxin] + 2 S-adenosyl-L-methionine = 2-methyladenosine(2503) in 23S rRNA + 5'-deoxyadenosine + L-methionine + 2 oxidized [2Fe-2S]-[ferredoxin] + S-adenosyl-L-homocysteine. The catalysed reaction is adenosine(37) in tRNA + 2 reduced [2Fe-2S]-[ferredoxin] + 2 S-adenosyl-L-methionine = 2-methyladenosine(37) in tRNA + 5'-deoxyadenosine + L-methionine + 2 oxidized [2Fe-2S]-[ferredoxin] + S-adenosyl-L-homocysteine. Its function is as follows. Specifically methylates position 2 of adenine 2503 in 23S rRNA and position 2 of adenine 37 in tRNAs. m2A2503 modification seems to play a crucial role in the proofreading step occurring at the peptidyl transferase center and thus would serve to optimize ribosomal fidelity. The chain is Dual-specificity RNA methyltransferase RlmN from Francisella tularensis subsp. holarctica (strain LVS).